The sequence spans 421 residues: Zinc metalloproteinase-disintegrin-like crotastatin (421 aa).

The Peptidase M12B domain occupies lysine 10–proline 206. Asparagine 29 carries N-linked (GlcNAc...) asparagine glycosylation. Cystine bridges form between cysteine 121–cysteine 201, cysteine 161–cysteine 185, and cysteine 163–cysteine 168. Histidine 146 serves as a coordination point for Zn(2+). Glutamate 147 is a catalytic residue. Residues histidine 150 and histidine 156 each contribute to the Zn(2+) site. The Disintegrin domain occupies proline 214–asparagine 299. Residues valine 216, asparagine 219, phenylalanine 221, glutamate 223, glutamate 226, and aspartate 229 each coordinate Ca(2+). Intrachain disulfides connect cysteine 217–cysteine 246, cysteine 228–cysteine 241, cysteine 230–cysteine 236, cysteine 240–cysteine 263, cysteine 254–cysteine 260, cysteine 259–cysteine 285, cysteine 272–cysteine 292, cysteine 279–cysteine 310, cysteine 303–cysteine 315, cysteine 322–cysteine 372, cysteine 337–cysteine 383, cysteine 350–cysteine 360, cysteine 367–cysteine 409, and cysteine 403–cysteine 414. The D/ECD-tripeptide motif lies at glutamate 278–aspartate 280. Residues aspartate 280, methionine 281, aspartate 283, aspartate 294, and arginine 295 each contribute to the Ca(2+) site.

The protein belongs to the venom metalloproteinase (M12B) family. P-III subfamily. P-IIIc sub-subfamily. In terms of assembly, homodimer; disulfide-linked. The cofactor is Zn(2+). Expressed by the venom gland.

Its subcellular location is the secreted. Snake venom zinc metalloprotease that induces apoptosis in vascular endothelial cells (VEC), without degrading the extracellular matrix (it cannot cleave collagen) or inhibiting adhesion of VEC. Has also fibrinogenolytic and hemorrhagic activities. The polypeptide is Zinc metalloproteinase-disintegrin-like crotastatin (Crotalus durissus terrificus (South American rattlesnake)).